The sequence spans 434 residues: Alpha-enolase (434 aa).

Serine 2 is subject to N-acetylserine. Lysine 5 is subject to N6-acetyllysine. Serine 27 carries the post-translational modification Phosphoserine. Serine 40 lines the Mg(2+) pocket. At tyrosine 44 the chain carries Phosphotyrosine. Lysine 60 is modified (N6-acetyllysine; alternate). Lysine 60 is modified (N6-succinyllysine; alternate). Lysine 64 and lysine 71 each carry N6-acetyllysine. Lysine 89 carries the post-translational modification N6-acetyllysine; alternate. Lysine 89 carries the post-translational modification N6-succinyllysine; alternate. N6-acetyllysine occurs at positions 92 and 126. 2 residues coordinate substrate: histidine 158 and glutamate 167. Lysine 193 and lysine 199 each carry N6-acetyllysine. Position 202 is an N6-acetyllysine; alternate (lysine 202). Residue lysine 202 forms a Glycyl lysine isopeptide (Lys-Gly) (interchain with G-Cter in SUMO2); alternate linkage. The active-site Proton donor is glutamate 210. 2 positions are modified to N6-acetyllysine; alternate: lysine 228 and lysine 233. Lysine 228 is subject to N6-succinyllysine; alternate. Lysine 228 bears the N6-(2-hydroxyisobutyryl)lysine; alternate mark. The residue at position 233 (lysine 233) is an N6-malonyllysine; alternate. Aspartate 245 provides a ligand contact to Mg(2+). Serine 254 carries the phosphoserine modification. Lysine 256 carries the post-translational modification N6-acetyllysine. A phosphoserine mark is found at serine 263 and serine 272. N6-acetyllysine; alternate is present on lysine 281. Lysine 281 is subject to N6-(2-hydroxyisobutyryl)lysine; alternate. The residue at position 285 (lysine 285) is an N6-acetyllysine. Tyrosine 287 is modified (phosphotyrosine). Residue serine 291 is modified to Phosphoserine. Positions 293 and 318 each coordinate Mg(2+). 2 residues coordinate substrate: glutamate 293 and aspartate 318. 2 positions are modified to N6-acetyllysine: lysine 335 and lysine 343. The Proton acceptor role is filled by lysine 343. Residues 370–373 and lysine 394 each bind substrate; that span reads SHRS. A required for interaction with PLG region spans residues 405–434; the sequence is AKYNQLLRIEEELGSKAKFAGRNFRNPLAK. N6-acetyllysine is present on lysine 406. Lysine 420 is modified (N6-acetyllysine; alternate). Lysine 420 bears the N6-succinyllysine; alternate mark. Lysine 420 carries the post-translational modification N6-malonyllysine; alternate.

The protein belongs to the enolase family. In terms of assembly, mammalian enolase is composed of 3 isozyme subunits, alpha, beta and gamma, which can form homodimers or heterodimers which are cell-type and development-specific. ENO1 interacts with PLG in the neuronal plasma membrane and promotes its activation. The C-terminal lysine is required for this binding. Interacts with ENO4 and PGAM2. Interacts with CMTM6. Requires Mg(2+) as cofactor. Post-translationally, ISGylated. In terms of processing, lysine 2-hydroxyisobutyrylation (Khib) by p300/EP300 activates the phosphopyruvate hydratase activity.

The protein resides in the cytoplasm. It localises to the cell membrane. The catalysed reaction is (2R)-2-phosphoglycerate = phosphoenolpyruvate + H2O. Its pathway is carbohydrate degradation; glycolysis; pyruvate from D-glyceraldehyde 3-phosphate: step 4/5. Its function is as follows. Glycolytic enzyme the catalyzes the conversion of 2-phosphoglycerate to phosphoenolpyruvate. In addition to glycolysis, involved in various processes such as growth control, hypoxia tolerance and allergic responses. May also function in the intravascular and pericellular fibrinolytic system due to its ability to serve as a receptor and activator of plasminogen on the cell surface of several cell-types such as leukocytes and neurons. Stimulates immunoglobulin production. The chain is Alpha-enolase (ENO1) from Pongo abelii (Sumatran orangutan).